Here is a 571-residue protein sequence, read N- to C-terminus: Phosphoenolpyruvate-protein phosphotransferase (571 aa).

His-207 (tele-phosphohistidine intermediate) is an active-site residue. Arg-312 and Arg-348 together coordinate phosphoenolpyruvate. Residues Glu-435 and Asp-459 each coordinate Mg(2+). Residues 458–459 (ND) and Arg-469 contribute to the phosphoenolpyruvate site. The active-site Proton donor is Cys-506.

This sequence belongs to the PEP-utilizing enzyme family. As to quaternary structure, homodimer. Mg(2+) is required as a cofactor.

Its subcellular location is the cytoplasm. The enzyme catalyses L-histidyl-[protein] + phosphoenolpyruvate = N(pros)-phospho-L-histidyl-[protein] + pyruvate. In terms of biological role, general (non sugar-specific) component of the phosphoenolpyruvate-dependent sugar phosphotransferase system (sugar PTS). This major carbohydrate active-transport system catalyzes the phosphorylation of incoming sugar substrates concomitantly with their translocation across the cell membrane. Enzyme I transfers the phosphoryl group from phosphoenolpyruvate (PEP) to the phosphoryl carrier protein (HPr). The protein is Phosphoenolpyruvate-protein phosphotransferase (ptsI) of Chlamydia trachomatis serovar D (strain ATCC VR-885 / DSM 19411 / UW-3/Cx).